Here is a 389-residue protein sequence, read N- to C-terminus: Type III polyketide synthase 21 (389 aa).

Residue C170 is the Nucleophile of the active site.

This sequence belongs to the thiolase-like superfamily. Chalcone/stilbene synthases family. In terms of tissue distribution, expressed in anthers. Expressed in young and adult flowers.

In terms of biological role, plant type III polyketide synthases (PKSs) that catalyzes the condensation of fatty acyl-CoA with malonyl-CoA to generate triketide and tetraketide alpha-pyrones, the main components of pollen exine and potential sporopollenin precursors. The polypeptide is Type III polyketide synthase 21 (PKS21) (Oryza sativa subsp. japonica (Rice)).